Here is a 428-residue protein sequence, read N- to C-terminus: Ribulose bisphosphate carboxylase (428 aa).

The Proton acceptor role is filled by Lys-151. Residue Lys-153 coordinates substrate. Residues Lys-177, Asp-179, and Glu-180 each coordinate Mg(2+). Position 177 is an N6-carboxylysine (Lys-177). His-270 serves as the catalytic Proton acceptor. Residues Arg-271, His-303, 354–356 (SGG), and 376–379 (QFGG) each bind substrate.

Belongs to the RuBisCO large chain family. Type III subfamily. In terms of assembly, homodimer. In contrast to form I RuBisCO, the form III RuBisCO is composed solely of large subunits. It depends on Mg(2+) as a cofactor.

It carries out the reaction 2 (2R)-3-phosphoglycerate + 2 H(+) = D-ribulose 1,5-bisphosphate + CO2 + H2O. The catalysed reaction is D-ribulose 1,5-bisphosphate + O2 = 2-phosphoglycolate + (2R)-3-phosphoglycerate + 2 H(+). With respect to regulation, reversibly inhibited by O(2). Catalyzes the addition of molecular CO(2) and H(2)O to ribulose 1,5-bisphosphate (RuBP), generating two molecules of 3-phosphoglycerate (3-PGA). Functions in an archaeal AMP degradation pathway, together with AMP phosphorylase and R15P isomerase. This is Ribulose bisphosphate carboxylase from Methanosarcina acetivorans (strain ATCC 35395 / DSM 2834 / JCM 12185 / C2A).